Consider the following 544-residue polypeptide: Chaperonin GroEL 1 (544 aa).

Residues 29–32, 86–90, Gly413, 479–481, and Asp495 each bind ATP; these read TLGP, DGTTT, and NAA.

It belongs to the chaperonin (HSP60) family. Forms a cylinder of 14 subunits composed of two heptameric rings stacked back-to-back. Interacts with the co-chaperonin GroES.

Its subcellular location is the cytoplasm. It catalyses the reaction ATP + H2O + a folded polypeptide = ADP + phosphate + an unfolded polypeptide.. Functionally, together with its co-chaperonin GroES, plays an essential role in assisting protein folding. The GroEL-GroES system forms a nano-cage that allows encapsulation of the non-native substrate proteins and provides a physical environment optimized to promote and accelerate protein folding. This chain is Chaperonin GroEL 1, found in Parasynechococcus marenigrum (strain WH8102).